Consider the following 799-residue polypeptide: Probable inorganic carbon transporter subunit DabA (799 aa).

Zn(2+) is bound by residues C303, D305, H479, and C494. Residues 574–598 (AGAAAERSEALNGADPDKGVSETAS) form a disordered region.

Belongs to the inorganic carbon transporter (TC 9.A.2) DabA family. In terms of assembly, forms a complex with DabB. Zn(2+) is required as a cofactor.

It localises to the cell membrane. Part of an energy-coupled inorganic carbon pump. This is Probable inorganic carbon transporter subunit DabA from Natronomonas pharaonis (strain ATCC 35678 / DSM 2160 / CIP 103997 / JCM 8858 / NBRC 14720 / NCIMB 2260 / Gabara) (Halobacterium pharaonis).